A 360-amino-acid polypeptide reads, in one-letter code: D-alanine--D-alanine ligase (360 aa).

The region spanning 146–352 (KLCAVQAGIH…FTELIDRLVR (207 aa)) is the ATP-grasp domain. ATP is bound at residue 179–234 (KKRFAPPFFVKPANLGSSVGIAKIHSFDELENALDEACRLDVKILVEKAIEGREVE). 3 residues coordinate Mg(2+): aspartate 305, glutamate 319, and asparagine 321.

It belongs to the D-alanine--D-alanine ligase family. Requires Mg(2+) as cofactor. Mn(2+) is required as a cofactor.

It localises to the cytoplasm. The enzyme catalyses 2 D-alanine + ATP = D-alanyl-D-alanine + ADP + phosphate + H(+). It participates in cell wall biogenesis; peptidoglycan biosynthesis. Cell wall formation. This Chlorobium phaeobacteroides (strain BS1) protein is D-alanine--D-alanine ligase.